We begin with the raw amino-acid sequence, 308 residues long: Oxygen-dependent coproporphyrinogen-III oxidase (308 aa).

Ser100 is a binding site for substrate. Residues His104 and His114 each contribute to the a divalent metal cation site. Residue His114 is the Proton donor of the active site. Residue Asn116–Arg118 participates in substrate binding. A divalent metal cation is bound by residues His153 and His183. Positions Tyr248–Lys283 are important for dimerization. Gly266–Arg268 provides a ligand contact to substrate.

The protein belongs to the aerobic coproporphyrinogen-III oxidase family. Homodimer. It depends on a divalent metal cation as a cofactor.

It localises to the cytoplasm. It carries out the reaction coproporphyrinogen III + O2 + 2 H(+) = protoporphyrinogen IX + 2 CO2 + 2 H2O. It participates in porphyrin-containing compound metabolism; protoporphyrin-IX biosynthesis; protoporphyrinogen-IX from coproporphyrinogen-III (O2 route): step 1/1. Its function is as follows. Involved in the heme biosynthesis. Catalyzes the aerobic oxidative decarboxylation of propionate groups of rings A and B of coproporphyrinogen-III to yield the vinyl groups in protoporphyrinogen-IX. This is Oxygen-dependent coproporphyrinogen-III oxidase from Francisella tularensis subsp. holarctica (strain FTNF002-00 / FTA).